A 119-amino-acid chain; its full sequence is Small ribosomal subunit protein bS16 (119 aa).

Basic residues predominate over residues 96 to 107 (RKKRRAYRQRRS). The segment at 96 to 119 (RKKRRAYRQRRSTQREEAAKDATK) is disordered. Residues 108–119 (TQREEAAKDATK) show a composition bias toward basic and acidic residues.

The protein belongs to the bacterial ribosomal protein bS16 family.

The sequence is that of Small ribosomal subunit protein bS16 from Chlamydia pneumoniae (Chlamydophila pneumoniae).